The chain runs to 356 residues: MTRPIQASLDLQVMKQNLAIVRRAAPEARVWSVVKANAYGHGIERVWSALGATDGFAMLNLEEAITLRERGWKGPILMLEGFFHAQDLEAYDTYRLTTCIHSNWQLKALQNARLNAPLDIYVKVNSGMNRLGFQPERAQTVWQQLRAMRNVGEMTLMSHFAQADHPEGIGEAMRRIALATEGLQCAYSLSNSAATLWHPQAHYDWVRPGIILYGASPSGQWRDIADTGLKPVMTLSSEIIGVQTLSAGERVGYGGGYSVTQEQRIGIVAAGYADGYPRHAPTGTPVLVDGIRTRTVGTVSMDMLAVDLTPCPQAGIGTPVELWGKEIKVDDVASAAGTLGYGLLCAVAPRVPFVTT.

The active-site Proton acceptor; specific for D-alanine is Lys-35. At Lys-35 the chain carries N6-(pyridoxal phosphate)lysine. Arg-130 contacts substrate. Catalysis depends on Tyr-253, which acts as the Proton acceptor; specific for L-alanine. Met-301 is a binding site for substrate.

It belongs to the alanine racemase family. Requires pyridoxal 5'-phosphate as cofactor.

The enzyme catalyses L-alanine = D-alanine. Functionally, isomerizes L-alanine to D-alanine which is then oxidized to pyruvate by DadA. The sequence is that of Alanine racemase, catabolic (dadX) from Salmonella typhi.